The following is a 283-amino-acid chain: Bifunctional protein FolD (283 aa).

NADP(+)-binding positions include 165-167, Ser190, and Val231; that span reads GRS.

It belongs to the tetrahydrofolate dehydrogenase/cyclohydrolase family. Homodimer.

It carries out the reaction (6R)-5,10-methylene-5,6,7,8-tetrahydrofolate + NADP(+) = (6R)-5,10-methenyltetrahydrofolate + NADPH. The enzyme catalyses (6R)-5,10-methenyltetrahydrofolate + H2O = (6R)-10-formyltetrahydrofolate + H(+). It participates in one-carbon metabolism; tetrahydrofolate interconversion. Its function is as follows. Catalyzes the oxidation of 5,10-methylenetetrahydrofolate to 5,10-methenyltetrahydrofolate and then the hydrolysis of 5,10-methenyltetrahydrofolate to 10-formyltetrahydrofolate. This Anoxybacillus flavithermus (strain DSM 21510 / WK1) protein is Bifunctional protein FolD.